The primary structure comprises 353 residues: Protein MGF 360-11L (353 aa).

The protein belongs to the asfivirus MGF 360 family. As to quaternary structure, interacts with host TBK1 ad IRF7.

In terms of biological role, plays a role in virus cell tropism, and may be required for efficient virus replication in macrophages. In addition, inhibits the phosphorylation of host TBK1 and IRF7 and thereby negatively regulates the host cGAS signaling pathway and antagonizes IFN-mediated antiviral activity. The chain is Protein MGF 360-11L from Ornithodoros (relapsing fever ticks).